We begin with the raw amino-acid sequence, 619 residues long: Vitamin B12 transporter BtuB (619 aa).

The N-terminal stretch at 1 to 25 is a signal peptide; it reads MINKKRLLLSTVSIMVISGWNQASA. Positions 31–38 match the TonB box motif; the sequence is DSLVVTAS. In terms of domain architecture, TBDR plug spans 43 to 157; it reads PISSILAPYT…IGGVINIITT (115 aa). Cyanocob(III)alamin is bound by residues leucine 88, serine 90, and 115-116; that span reads IS. In terms of domain architecture, TBDR beta-barrel spans 160–619; that stretch reads KLGTSLNVGI…EYYLTGSYNF (460 aa). The next 3 membrane-spanning stretches (beta stranded) occupy residues 163–170, 174–183, and 189–200; these read TSLNVGIG, YQTYDGATQQ, and TVLTAAANYTYT. Positions 204, 216, 218, and 220 each coordinate Ca(2+). 2 consecutive transmembrane segments (beta stranded) span residues 222 to 232 and 237 to 253; these read FMSKMLWLGVD and EQVS…NRTS. 2 residues coordinate Ca(2+): tyrosine 254 and aspartate 255. Cyanocob(III)alamin is bound at residue alanine 256. Aspartate 268 lines the Ca(2+) pocket. 17 beta stranded membrane-spanning segments follow: residues 270 to 284, 286 to 303, 316 to 332, 335 to 344, 360 to 376, 378 to 388, 392 to 407, 410 to 424, 441 to 450, 456 to 465, 478 to 495, 499 to 514, 522 to 534, 540 to 556, 563 to 577, 590 to 601, and 607 to 619; these read RELY…VRFN, GIYS…KDYN, SLND…NTFQ, QGIVSTGVDF, KTVR…QQLK, FILEGAIRSDK, AGWN…WEFI, YRLI…KAPT, ESKQWEGGIE, LTWRMTVYRN, YYNI…TGLI, MFQH…PRNS, RRAK…QLDW, DWGL…DKDF, RVKL…LTVS, IANLLDKDYETV, and PGRE…SYNF. Serine 316 is a binding site for cyanocob(III)alamin. Arginine 522 is a cyanocob(III)alamin binding site. The TonB C-terminal box motif lies at 602–619; the sequence is YGYRIPGREYYLTGSYNF.

The protein belongs to the TonB-dependent receptor family. BtuB (TC 1.B.14.3.1) subfamily.

It localises to the cell outer membrane. Functionally, involved in the active translocation of vitamin B12 (cyanocobalamin) across the outer membrane to the periplasmic space. It derives its energy for transport by interacting with the trans-periplasmic membrane protein TonB. The protein is Vitamin B12 transporter BtuB of Photorhabdus laumondii subsp. laumondii (strain DSM 15139 / CIP 105565 / TT01) (Photorhabdus luminescens subsp. laumondii).